Consider the following 184-residue polypeptide: Ribosome-recycling factor (184 aa).

It belongs to the RRF family.

The protein resides in the cytoplasm. Its function is as follows. Responsible for the release of ribosomes from messenger RNA at the termination of protein biosynthesis. May increase the efficiency of translation by recycling ribosomes from one round of translation to another. In Psychrobacter sp. (strain PRwf-1), this protein is Ribosome-recycling factor.